Reading from the N-terminus, the 431-residue chain is Glucose-1-phosphate adenylyltransferase (431 aa).

Residue lysine 39 participates in beta-D-fructose 1,6-bisphosphate binding. Arginine 40, histidine 46, and arginine 52 together coordinate AMP. Tyrosine 114 is a binding site for alpha-D-glucose 1-phosphate. AMP is bound at residue arginine 130. Alpha-D-glucose 1-phosphate contacts are provided by residues glycine 179, 194 to 195, and serine 212; that span reads EK. AMP contacts are provided by glutamate 370 and arginine 386. Residues 419 to 423 and 429 to 431 contribute to the beta-D-fructose 1,6-bisphosphate site; these read REMLR and QER.

Belongs to the bacterial/plant glucose-1-phosphate adenylyltransferase family. Homotetramer.

The catalysed reaction is alpha-D-glucose 1-phosphate + ATP + H(+) = ADP-alpha-D-glucose + diphosphate. It participates in glycan biosynthesis; glycogen biosynthesis. Allosterically activated by fructose-1,6-bisphosphate (F16BP) and inhibited by AMP. Functionally, involved in the biosynthesis of ADP-glucose, a building block required for the elongation reactions to produce glycogen. Catalyzes the reaction between ATP and alpha-D-glucose 1-phosphate (G1P) to produce pyrophosphate and ADP-Glc. This is Glucose-1-phosphate adenylyltransferase from Shigella boydii serotype 18 (strain CDC 3083-94 / BS512).